Consider the following 291-residue polypeptide: Porphobilinogen deaminase (291 aa).

At C237 the chain carries S-(dipyrrolylmethanemethyl)cysteine.

It belongs to the HMBS family. As to quaternary structure, monomer. It depends on dipyrromethane as a cofactor.

The catalysed reaction is 4 porphobilinogen + H2O = hydroxymethylbilane + 4 NH4(+). It functions in the pathway porphyrin-containing compound metabolism; protoporphyrin-IX biosynthesis; coproporphyrinogen-III from 5-aminolevulinate: step 2/4. Functionally, tetrapolymerization of the monopyrrole PBG into the hydroxymethylbilane pre-uroporphyrinogen in several discrete steps. The polypeptide is Porphobilinogen deaminase (Clostridium acetobutylicum (strain ATCC 824 / DSM 792 / JCM 1419 / IAM 19013 / LMG 5710 / NBRC 13948 / NRRL B-527 / VKM B-1787 / 2291 / W)).